Consider the following 81-residue polypeptide: Acyl carrier protein (81 aa).

In terms of domain architecture, Carrier spans 4 to 79 (SEIFGKVKDI…AAVDFIAGKV (76 aa)). Ser39 carries the O-(pantetheine 4'-phosphoryl)serine modification.

The protein belongs to the acyl carrier protein (ACP) family. 4'-phosphopantetheine is transferred from CoA to a specific serine of apo-ACP by AcpS. This modification is essential for activity because fatty acids are bound in thioester linkage to the sulfhydryl of the prosthetic group.

Its subcellular location is the cytoplasm. The protein operates within lipid metabolism; fatty acid biosynthesis. Its function is as follows. Carrier of the growing fatty acid chain in fatty acid biosynthesis. The chain is Acyl carrier protein from Acaryochloris marina (strain MBIC 11017).